Consider the following 892-residue polypeptide: Putative GTP diphosphokinase RSH1, chloroplastic (892 aa).

The N-terminal 52 residues, 1–52 (MQPPTGAVSGSSSSSLECVSSCRTSWRGGGRPYECSVLSCAWNAPRALTGAL), are a transit peptide targeting the chloroplast. An HD domain is found at 184 to 291 (FIIHPVEVAR…VKLADRLHNM (108 aa)). The TGS domain occupies 574-637 (LGSRVFVFTP…ANAEVVEIII (64 aa)). Residues 809 to 880 (WLCIVCVDRK…MILGVLGWSV (72 aa)) enclose the ACT domain.

It belongs to the RelA/SpoT family.

The protein localises to the plastid. Its subcellular location is the chloroplast. The enzyme catalyses GTP + ATP = guanosine 3'-diphosphate 5'-triphosphate + AMP. Its function is as follows. May be involved in a rapid plant ppGpp (guanosine 3'-diphosphate 5'-diphosphate)-mediated response to pathogens and other stresses. In Oryza sativa subsp. japonica (Rice), this protein is Putative GTP diphosphokinase RSH1, chloroplastic (RSH1).